Consider the following 204-residue polypeptide: Inactive ribonuclease-like protein 9 (204 aa).

An N-terminal signal peptide occupies residues 1–26 (MMRTLITIHPLPLLLLLQQLLQPVQF). 3 disulfides stabilise this stretch: Cys97–Cys152, Cys115–Cys167, and Cys122–Cys129. Asn130 and Asn142 each carry an N-linked (GlcNAc...) asparagine glycan.

Belongs to the pancreatic ribonuclease family.

Its subcellular location is the secreted. Functionally, does not exhibit any ribonuclease activity. The polypeptide is Inactive ribonuclease-like protein 9 (RNASE9) (Pongo pygmaeus (Bornean orangutan)).